We begin with the raw amino-acid sequence, 1415 residues long: DNA-directed RNA polymerase subunit beta' (1415 aa).

Zn(2+) is bound by residues cysteine 70, cysteine 72, cysteine 85, and cysteine 88. Mg(2+) contacts are provided by aspartate 461, aspartate 463, and aspartate 465. Cysteine 820, cysteine 894, cysteine 901, and cysteine 904 together coordinate Zn(2+).

It belongs to the RNA polymerase beta' chain family. As to quaternary structure, the RNAP catalytic core consists of 2 alpha, 1 beta, 1 beta' and 1 omega subunit. When a sigma factor is associated with the core the holoenzyme is formed, which can initiate transcription. Mg(2+) serves as cofactor. The cofactor is Zn(2+).

The enzyme catalyses RNA(n) + a ribonucleoside 5'-triphosphate = RNA(n+1) + diphosphate. DNA-dependent RNA polymerase catalyzes the transcription of DNA into RNA using the four ribonucleoside triphosphates as substrates. In Cupriavidus necator (strain ATCC 17699 / DSM 428 / KCTC 22496 / NCIMB 10442 / H16 / Stanier 337) (Ralstonia eutropha), this protein is DNA-directed RNA polymerase subunit beta'.